A 407-amino-acid polypeptide reads, in one-letter code: Homeobox even-skipped homolog protein 1 (407 aa).

Disordered regions lie at residues 29–120 and 137–179; these read EAVG…SDFY and EYQH…ACSA. Over residues 102–114 the composition is skewed to polar residues; the sequence is DSLSGQGQPSSSD. The homeobox DNA-binding region spans 183-242; that stretch reads MRRYRTAFTREQIARLEKEFYRENYVSRPRRCELAAALNLPETTIKVWFQNRRMKDKRQR.

The protein belongs to the even-skipped homeobox family.

The protein localises to the nucleus. Its function is as follows. May play a role in the specification of neuronal cell types. In Homo sapiens (Human), this protein is Homeobox even-skipped homolog protein 1 (EVX1).